The sequence spans 250 residues: uncharacterized protein (250 aa).

The protein belongs to the glycosyltransferase 2 family.

This is an uncharacterized protein from Haemophilus influenzae (strain ATCC 51907 / DSM 11121 / KW20 / Rd).